We begin with the raw amino-acid sequence, 275 residues long: Acetyl-coenzyme A carboxylase carboxyl transferase subunit beta (275 aa).

Positions 18-275 (KDNAGPAVPS…IHRLGGEMHA (258 aa)) constitute a CoA carboxyltransferase N-terminal domain. The segment at 23 to 47 (PAVPSNTHSSKSNGNPVSEMKENKR) is disordered. Over residues 26 to 38 (PSNTHSSKSNGNP) the composition is skewed to polar residues.

This sequence belongs to the AccD/PCCB family. Acetyl-CoA carboxylase is a heterohexamer composed of biotin carboxyl carrier protein (AccB), biotin carboxylase (AccC) and two subunits each of ACCase subunit alpha (AccA) and ACCase subunit beta (AccD).

It localises to the cytoplasm. The catalysed reaction is N(6)-carboxybiotinyl-L-lysyl-[protein] + acetyl-CoA = N(6)-biotinyl-L-lysyl-[protein] + malonyl-CoA. The protein operates within lipid metabolism; malonyl-CoA biosynthesis; malonyl-CoA from acetyl-CoA: step 1/1. Functionally, component of the acetyl coenzyme A carboxylase (ACC) complex. Biotin carboxylase (BC) catalyzes the carboxylation of biotin on its carrier protein (BCCP) and then the CO(2) group is transferred by the transcarboxylase to acetyl-CoA to form malonyl-CoA. This is Acetyl-coenzyme A carboxylase carboxyl transferase subunit beta from Alkaliphilus oremlandii (strain OhILAs) (Clostridium oremlandii (strain OhILAs)).